Reading from the N-terminus, the 669-residue chain is tRNA 5-methylaminomethyl-2-thiouridine biosynthesis bifunctional protein MnmC (669 aa).

The interval Met-1 to Lys-246 is tRNA (mnm(5)s(2)U34)-methyltransferase. The interval Ile-271–Ile-669 is FAD-dependent cmnm(5)s(2)U34 oxidoreductase.

In the N-terminal section; belongs to the methyltransferase superfamily. tRNA (mnm(5)s(2)U34)-methyltransferase family. It in the C-terminal section; belongs to the DAO family. Requires FAD as cofactor.

The protein localises to the cytoplasm. It catalyses the reaction 5-aminomethyl-2-thiouridine(34) in tRNA + S-adenosyl-L-methionine = 5-methylaminomethyl-2-thiouridine(34) in tRNA + S-adenosyl-L-homocysteine + H(+). Functionally, catalyzes the last two steps in the biosynthesis of 5-methylaminomethyl-2-thiouridine (mnm(5)s(2)U) at the wobble position (U34) in tRNA. Catalyzes the FAD-dependent demodification of cmnm(5)s(2)U34 to nm(5)s(2)U34, followed by the transfer of a methyl group from S-adenosyl-L-methionine to nm(5)s(2)U34, to form mnm(5)s(2)U34. The polypeptide is tRNA 5-methylaminomethyl-2-thiouridine biosynthesis bifunctional protein MnmC (Pseudoalteromonas translucida (strain TAC 125)).